The primary structure comprises 185 residues: F-box protein At1g61340 (185 aa).

Residues Ser78–Ser126 enclose the F-box domain.

This Arabidopsis thaliana (Mouse-ear cress) protein is F-box protein At1g61340.